The following is a 133-amino-acid chain: Large ribosomal subunit protein eL14 (133 aa).

It belongs to the eukaryotic ribosomal protein eL14 family.

The protein is Large ribosomal subunit protein eL14 of Pisum sativum (Garden pea).